A 249-amino-acid chain; its full sequence is Probable transcriptional regulatory protein CYB_1350 (249 aa).

Belongs to the TACO1 family.

It localises to the cytoplasm. This Synechococcus sp. (strain JA-2-3B'a(2-13)) (Cyanobacteria bacterium Yellowstone B-Prime) protein is Probable transcriptional regulatory protein CYB_1350.